Reading from the N-terminus, the 499-residue chain is Probable cytosol aminopeptidase (499 aa).

Mn(2+) contacts are provided by lysine 267 and aspartate 272. Residue lysine 279 is part of the active site. Aspartate 290, aspartate 349, and glutamate 351 together coordinate Mn(2+). Arginine 353 is a catalytic residue.

It belongs to the peptidase M17 family. It depends on Mn(2+) as a cofactor.

The protein resides in the cytoplasm. It catalyses the reaction Release of an N-terminal amino acid, Xaa-|-Yaa-, in which Xaa is preferably Leu, but may be other amino acids including Pro although not Arg or Lys, and Yaa may be Pro. Amino acid amides and methyl esters are also readily hydrolyzed, but rates on arylamides are exceedingly low.. The catalysed reaction is Release of an N-terminal amino acid, preferentially leucine, but not glutamic or aspartic acids.. Functionally, presumably involved in the processing and regular turnover of intracellular proteins. Catalyzes the removal of unsubstituted N-terminal amino acids from various peptides. The chain is Probable cytosol aminopeptidase from Buchnera aphidicola subsp. Acyrthosiphon pisum (strain 5A).